Reading from the N-terminus, the 433-residue chain is Trigger factor (433 aa).

The PPIase FKBP-type domain maps to 163 to 248; sequence GDTVNIDFSG…VNEIKFKDVP (86 aa).

Belongs to the FKBP-type PPIase family. Tig subfamily.

It localises to the cytoplasm. The catalysed reaction is [protein]-peptidylproline (omega=180) = [protein]-peptidylproline (omega=0). In terms of biological role, involved in protein export. Acts as a chaperone by maintaining the newly synthesized protein in an open conformation. Functions as a peptidyl-prolyl cis-trans isomerase. The sequence is that of Trigger factor from Staphylococcus epidermidis (strain ATCC 35984 / DSM 28319 / BCRC 17069 / CCUG 31568 / BM 3577 / RP62A).